Here is a 280-residue protein sequence, read N- to C-terminus: Putative pyruvate, phosphate dikinase regulatory protein (280 aa).

154-161 (GVSRTSKT) is an ADP binding site.

It belongs to the pyruvate, phosphate/water dikinase regulatory protein family. PDRP subfamily.

The catalysed reaction is N(tele)-phospho-L-histidyl/L-threonyl-[pyruvate, phosphate dikinase] + ADP = N(tele)-phospho-L-histidyl/O-phospho-L-threonyl-[pyruvate, phosphate dikinase] + AMP + H(+). The enzyme catalyses N(tele)-phospho-L-histidyl/O-phospho-L-threonyl-[pyruvate, phosphate dikinase] + phosphate + H(+) = N(tele)-phospho-L-histidyl/L-threonyl-[pyruvate, phosphate dikinase] + diphosphate. Its function is as follows. Bifunctional serine/threonine kinase and phosphorylase involved in the regulation of the pyruvate, phosphate dikinase (PPDK) by catalyzing its phosphorylation/dephosphorylation. This Nitrobacter winogradskyi (strain ATCC 25391 / DSM 10237 / CIP 104748 / NCIMB 11846 / Nb-255) protein is Putative pyruvate, phosphate dikinase regulatory protein.